The following is a 133-amino-acid chain: Fatty acid-binding protein homolog 2 (133 aa).

A fatty acid contacts are provided by residues Arg-107 and 127 to 129; that span reads RTY.

This sequence belongs to the calycin superfamily. Fatty-acid binding protein (FABP) family.

Its function is as follows. May play a role in the acquisition, storage, and transport of lipids, and may be important to the organism since it is incapable of synthesizing most of its lipids de novo. The sequence is that of Fatty acid-binding protein homolog 2 (FABP2) from Echinococcus granulosus (Hydatid tapeworm).